Here is a 457-residue protein sequence, read N- to C-terminus: Bifunctional F420 biosynthesis protein FbiB (457 aa).

Residues 1-253 are coenzyme F420:L-glutamate ligase; sequence MTSSDSHRSA…NGPDDLFWLG (253 aa). Residues 29 to 32, Ser-59, and Lys-64 each bind GTP; that span reads LPEF. Asp-118 provides a ligand contact to a divalent metal cation. Position 121 (Asn-121) interacts with GTP. A divalent metal cation-binding residues include Asp-159 and Thr-160. Residues 254 to 457 are dehydro-coenzyme F420-0 reductase; sequence TTEALELGRQ…VRVADLLLRK (204 aa). Residues 269–273 and Ala-297 each bind FMN; that span reads RRSVR. A coenzyme F420-(gamma-Glu)n-binding site is contributed by Asp-329. Residues Gly-408 and Arg-445 each contribute to the FMN site.

The protein in the N-terminal section; belongs to the CofE family. It depends on Mg(2+) as a cofactor. Requires Mn(2+) as cofactor. The cofactor is K(+).

The enzyme catalyses oxidized coenzyme F420-0 + GTP + L-glutamate = oxidized coenzyme F420-1 + GDP + phosphate + H(+). It catalyses the reaction oxidized coenzyme F420-1 + GTP + L-glutamate = oxidized coenzyme F420-2 + GDP + phosphate + H(+). It carries out the reaction oxidized coenzyme F420-(gamma-L-Glu)(n) + GTP + L-glutamate = oxidized coenzyme F420-(gamma-L-Glu)(n+1) + GDP + phosphate + H(+). The catalysed reaction is oxidized coenzyme F420-0 + FMN + H(+) = dehydro coenzyme F420-0 + FMNH2. The protein operates within cofactor biosynthesis; coenzyme F420 biosynthesis. Its function is as follows. Bifunctional enzyme that catalyzes the GTP-dependent successive addition of multiple gamma-linked L-glutamates to the L-lactyl phosphodiester of 7,8-didemethyl-8-hydroxy-5-deazariboflavin (F420-0) to form polyglutamated F420 derivatives, and the FMNH2-dependent reduction of dehydro-F420-0 to form F420-0. This is Bifunctional F420 biosynthesis protein FbiB from Mycobacterium leprae (strain TN).